The following is a 148-amino-acid chain: Large ribosomal subunit protein uL15 (148 aa).

A disordered region spans residues 1–51 (MNLSNLKPAEGSTKTRKRIGRGPGSGLGGTSTRGHKGAKSRSGYKNKIGFE). Residues 21-31 (RGPGSGLGGTS) show a composition bias toward gly residues. Over residues 33–44 (RGHKGAKSRSGY) the composition is skewed to basic residues.

It belongs to the universal ribosomal protein uL15 family. As to quaternary structure, part of the 50S ribosomal subunit.

Functionally, binds to the 23S rRNA. The polypeptide is Large ribosomal subunit protein uL15 (Parabacteroides distasonis (strain ATCC 8503 / DSM 20701 / CIP 104284 / JCM 5825 / NCTC 11152)).